A 329-amino-acid polypeptide reads, in one-letter code: Ankyrin repeat and SOCS box protein 5 (329 aa).

ANK repeat units lie at residues 69–98 (ADRSPLHEAASQGRLLALRTLLSQGYNVNA), 102–131 (DHVTPLHEACLGDHVACARTLLEAGANANA), 135–164 (DGVTPLFNACSQGSASCAELLLEYGAKAQL), 167–196 (CFPSPTHEAASKGHHECLDILIAWGIDVDQ), 200–229 (HLGTPLYVACMSQQFHCIWKLLYAGADVHK), and 232–261 (YWDTPLHAAAQQPSTEIVNLLLEFGADINA). The SOCS box domain maps to 278-329 (AVERILLQHEATPSSLCQLCRLCIRNYIGRQRFHLIPQLQLPTLLQNFLQYR).

This sequence belongs to the ankyrin SOCS box (ASB) family.

Its pathway is protein modification; protein ubiquitination. In terms of biological role, may be a substrate-recognition component of a SCF-like ECS (Elongin-Cullin-SOCS-box protein) E3 ubiquitin-protein ligase complex which mediates the ubiquitination and subsequent proteasomal degradation of target proteins. May play a role in the initiation of arteriogenesis. The polypeptide is Ankyrin repeat and SOCS box protein 5 (Asb5) (Mus musculus (Mouse)).